Here is a 641-residue protein sequence, read N- to C-terminus: MPIITLPDGTEKKYDSAVTIDQIASEIGPGLAKAALAGRVNGELIDTCIPITQNSHIQIITSKDDEGLEIIRHSFAHLLGHAVKQLYPEAKMAIGPVIEDGFYYDISYKDTFTPDDLLKIEKRMKELVNRDYSVGVEIVSPEKAKEVFTDRGEIFKLDIVKNIPKNEIIKLYKHQEYIDMCRGPHVPNTRHLRAFKLMKVSGAYWRGDSNNEMLQRIYGTAWKSSKELKEYLSRIEEAEKRDHRKLGKKYSLFHSQEEAPGMVFWHPKGWTIYRILEDFIRETITKYDYQEVKSPQVVDRSLWEKSGHWDKFKEDMFTTTSENREYAIKPMNCPCHIQIFNQGLKSYRDLPIRLSEFGSCHRNEPSGALHGLMRVRNFVQDDAHIFCTDEQIQEEVQNFIDLVFEVYKTFGFDSILIKLSTRPVKRVGSDDIWDKSEKALSEALDSKGLDWSLLPGEGAFYGPKIEFSLKDCLNRVWQCGTIQVDFSMPQRLNASYIDITGRKQTPVMLHRAILGSFERFIGILIENYSGNFPTWLSPIQIMIMGITDRNNEACFTAKDKLVDFGFRAEIDIRNEKVGFKIREHTMQRIPFLIIIGDKEEENSEISVRTREGKDLGNMSIDKFKLIIDESISKKGIQGNQS.

The TGS domain maps to 1–61; the sequence is MPIITLPDGT…TQNSHIQIIT (61 aa). The catalytic stretch occupies residues 242–533; sequence DHRKLGKKYS…LIENYSGNFP (292 aa). The Zn(2+) site is built by Cys333, His384, and His510.

This sequence belongs to the class-II aminoacyl-tRNA synthetase family. In terms of assembly, homodimer. It depends on Zn(2+) as a cofactor.

It localises to the cytoplasm. The catalysed reaction is tRNA(Thr) + L-threonine + ATP = L-threonyl-tRNA(Thr) + AMP + diphosphate + H(+). In terms of biological role, catalyzes the attachment of threonine to tRNA(Thr) in a two-step reaction: L-threonine is first activated by ATP to form Thr-AMP and then transferred to the acceptor end of tRNA(Thr). Also edits incorrectly charged L-seryl-tRNA(Thr). This chain is Threonine--tRNA ligase, found in Prochlorococcus marinus (strain NATL2A).